The chain runs to 164 residues: Ribosome maturation factor RimM (164 aa).

One can recognise a PRC barrel domain in the interval 90–161; that stretch reads KGSYFIADLI…TVTIKPLEIW (72 aa).

Belongs to the RimM family. As to quaternary structure, binds ribosomal protein uS19.

Its subcellular location is the cytoplasm. Functionally, an accessory protein needed during the final step in the assembly of 30S ribosomal subunit, possibly for assembly of the head region. Essential for efficient processing of 16S rRNA. May be needed both before and after RbfA during the maturation of 16S rRNA. It has affinity for free ribosomal 30S subunits but not for 70S ribosomes. In Clostridium botulinum (strain ATCC 19397 / Type A), this protein is Ribosome maturation factor RimM.